We begin with the raw amino-acid sequence, 356 residues long: MATQRKIIHIDMDCFYAAIEMRENPALIGKPVAVGGSVEGRGVLTTCNYEARKFGLHSAMPTAQALKRCPNLILVPVNMPLYKAVSEQIHQIFRRYTDIVEPLSLDEAYLDVTDCRQCSGSATWIAQEIRDAIWNELHLTASAGIAPLKFLAKIVSDQNKPNGQFVISPENMTAFIYDLPLKKIPGVGKVTNEKLAQLGLHTCGDIQHSDKAFIYKTFGKFGQRLWEFSHAIDNRKIEANRPRKSLAVENTLPTDIWHLAEAEQIVDELFKKLVFRLQRNWGERSLQEFKKLAIKLKFGDFTQTTLERTTDGLSRERFIELLQQVWQRTNRRSVRLIGLSVHYPTEKVKKQLNLWE.

The UmuC domain occupies 7 to 188 (IIHIDMDCFY…LPLKKIPGVG (182 aa)). Mg(2+) is bound by residues aspartate 11 and aspartate 106. Residue glutamate 107 is part of the active site.

It belongs to the DNA polymerase type-Y family. As to quaternary structure, monomer. It depends on Mg(2+) as a cofactor.

It localises to the cytoplasm. The catalysed reaction is DNA(n) + a 2'-deoxyribonucleoside 5'-triphosphate = DNA(n+1) + diphosphate. Poorly processive, error-prone DNA polymerase involved in untargeted mutagenesis. Copies undamaged DNA at stalled replication forks, which arise in vivo from mismatched or misaligned primer ends. These misaligned primers can be extended by PolIV. Exhibits no 3'-5' exonuclease (proofreading) activity. May be involved in translesional synthesis, in conjunction with the beta clamp from PolIII. This Actinobacillus pleuropneumoniae serotype 3 (strain JL03) protein is DNA polymerase IV.